Reading from the N-terminus, the 891-residue chain is DNA mismatch repair protein MutS (891 aa).

Residue glycine 634–serine 641 participates in ATP binding.

It belongs to the DNA mismatch repair MutS family.

In terms of biological role, this protein is involved in the repair of mismatches in DNA. It is possible that it carries out the mismatch recognition step. This protein has a weak ATPase activity. This Burkholderia mallei (strain NCTC 10247) protein is DNA mismatch repair protein MutS.